The sequence spans 557 residues: Dihydroxy-acid dehydratase (557 aa).

Cys50 lines the [2Fe-2S] cluster pocket. Asp82 is a Mg(2+) binding site. [2Fe-2S] cluster is bound at residue Cys123. The Mg(2+) site is built by Asp124 and Lys125. An N6-carboxylysine modification is found at Lys125. Position 195 (Cys195) interacts with [2Fe-2S] cluster. A Mg(2+)-binding site is contributed by Glu447. Ser473 (proton acceptor) is an active-site residue.

This sequence belongs to the IlvD/Edd family. Homodimer. [2Fe-2S] cluster is required as a cofactor. The cofactor is Mg(2+).

It catalyses the reaction (2R)-2,3-dihydroxy-3-methylbutanoate = 3-methyl-2-oxobutanoate + H2O. The catalysed reaction is (2R,3R)-2,3-dihydroxy-3-methylpentanoate = (S)-3-methyl-2-oxopentanoate + H2O. It participates in amino-acid biosynthesis; L-isoleucine biosynthesis; L-isoleucine from 2-oxobutanoate: step 3/4. It functions in the pathway amino-acid biosynthesis; L-valine biosynthesis; L-valine from pyruvate: step 3/4. In terms of biological role, functions in the biosynthesis of branched-chain amino acids. Catalyzes the dehydration of (2R,3R)-2,3-dihydroxy-3-methylpentanoate (2,3-dihydroxy-3-methylvalerate) into 2-oxo-3-methylpentanoate (2-oxo-3-methylvalerate) and of (2R)-2,3-dihydroxy-3-methylbutanoate (2,3-dihydroxyisovalerate) into 2-oxo-3-methylbutanoate (2-oxoisovalerate), the penultimate precursor to L-isoleucine and L-valine, respectively. This chain is Dihydroxy-acid dehydratase, found in Janthinobacterium sp. (strain Marseille) (Minibacterium massiliensis).